A 340-amino-acid polypeptide reads, in one-letter code: GTPase Obg (340 aa).

Residues methionine 1–leucine 159 form the Obg domain. The 170-residue stretch at serine 160–serine 329 folds into the OBG-type G domain. Residues glycine 166–serine 173, phenylalanine 191–lysine 195, aspartate 212–glycine 215, asparagine 279–aspartate 282, and glycine 310–aspartate 312 contribute to the GTP site. 2 residues coordinate Mg(2+): serine 173 and threonine 193.

The protein belongs to the TRAFAC class OBG-HflX-like GTPase superfamily. OBG GTPase family. As to quaternary structure, monomer. Requires Mg(2+) as cofactor.

The protein resides in the cytoplasm. Its function is as follows. An essential GTPase which binds GTP, GDP and possibly (p)ppGpp with moderate affinity, with high nucleotide exchange rates and a fairly low GTP hydrolysis rate. Plays a role in control of the cell cycle, stress response, ribosome biogenesis and in those bacteria that undergo differentiation, in morphogenesis control. The chain is GTPase Obg from Wolbachia sp. subsp. Brugia malayi (strain TRS).